A 252-amino-acid polypeptide reads, in one-letter code: 5'-nucleotidase SurE (252 aa).

A divalent metal cation contacts are provided by Asp8, Asp9, Ser39, and Asn91.

It belongs to the SurE nucleotidase family. The cofactor is a divalent metal cation.

The protein localises to the cytoplasm. The enzyme catalyses a ribonucleoside 5'-phosphate + H2O = a ribonucleoside + phosphate. Its function is as follows. Nucleotidase that shows phosphatase activity on nucleoside 5'-monophosphates. This Gemmatimonas aurantiaca (strain DSM 14586 / JCM 11422 / NBRC 100505 / T-27) protein is 5'-nucleotidase SurE.